The following is a 231-amino-acid chain: Protein fmp52-2, mitochondrial (231 aa).

The N-terminal 46 residues, 1–46 (MTMTTAAVFGCTGAVGSQILATLLAIDTFPSVKTISRRLPNVQSPK), are a transit peptide targeting the mitochondrion.

It belongs to the FMP52 family.

The protein resides in the mitochondrion outer membrane. The sequence is that of Protein fmp52-2, mitochondrial (fmp522) from Neosartorya fischeri (strain ATCC 1020 / DSM 3700 / CBS 544.65 / FGSC A1164 / JCM 1740 / NRRL 181 / WB 181) (Aspergillus fischerianus).